The sequence spans 179 residues: NADH dehydrogenase [ubiquinone] 1 beta subcomplex subunit 9 (179 aa).

Ala2 is modified (N-acetylalanine). Position 85 is a phosphoserine (Ser85).

The protein belongs to the complex I LYR family. In terms of assembly, mammalian complex I is composed of 45 different subunits.

Its subcellular location is the mitochondrion inner membrane. In terms of biological role, accessory subunit of the mitochondrial membrane respiratory chain NADH dehydrogenase (Complex I), that is believed to be not involved in catalysis. Complex I functions in the transfer of electrons from NADH to the respiratory chain. The immediate electron acceptor for the enzyme is believed to be ubiquinone. This is NADH dehydrogenase [ubiquinone] 1 beta subcomplex subunit 9 (Ndufb9) from Mus musculus (Mouse).